Consider the following 206-residue polypeptide: Recombination protein RecR (206 aa).

The segment at 58–73 adopts a C4-type zinc-finger fold; that stretch reads CNICGYITEKNICNFC. Residues 81-178 form the Toprim domain; sequence STIMIVADNR…KITKLAYGIP (98 aa).

It belongs to the RecR family.

In terms of biological role, may play a role in DNA repair. It seems to be involved in an RecBC-independent recombinational process of DNA repair. It may act with RecF and RecO. In Phytoplasma mali (strain AT), this protein is Recombination protein RecR.